The chain runs to 614 residues: Threonine--tRNA ligase (614 aa).

The editing domain stretch occupies residues 1–138; it reads MRILTIHARK…PLSELSKTIR (138 aa). Catalytic stretches follow at residues 195 to 492 and 196 to 492; these read NRVN…PYIP and RVND…PYIP. 3 residues coordinate Zn(2+): Cys-289, His-340, and His-461.

It belongs to the class-II aminoacyl-tRNA synthetase family. As to quaternary structure, homodimer. Zn(2+) serves as cofactor.

The protein localises to the cytoplasm. It catalyses the reaction tRNA(Thr) + L-threonine + ATP = L-threonyl-tRNA(Thr) + AMP + diphosphate + H(+). Functionally, catalyzes the attachment of threonine to tRNA(Thr) in a two-step reaction: L-threonine is first activated by ATP to form Thr-AMP and then transferred to the acceptor end of tRNA(Thr). Also edits incorrectly charged L-seryl-tRNA(Thr). This chain is Threonine--tRNA ligase, found in Staphylothermus marinus (strain ATCC 43588 / DSM 3639 / JCM 9404 / F1).